Here is a 329-residue protein sequence, read N- to C-terminus: Glutamyl-tRNA reductase (329 aa).

Residues 51 to 54 (TCLR), serine 99, 104 to 106 (EDQ), and glutamine 110 each bind substrate. Cysteine 52 serves as the catalytic Nucleophile. 179–184 (GIGELA) contributes to the NADP(+) binding site.

This sequence belongs to the glutamyl-tRNA reductase family. As to quaternary structure, homodimer.

The catalysed reaction is (S)-4-amino-5-oxopentanoate + tRNA(Glu) + NADP(+) = L-glutamyl-tRNA(Glu) + NADPH + H(+). It functions in the pathway porphyrin-containing compound metabolism; protoporphyrin-IX biosynthesis; 5-aminolevulinate from L-glutamyl-tRNA(Glu): step 1/2. Functionally, catalyzes the NADPH-dependent reduction of glutamyl-tRNA(Glu) to glutamate 1-semialdehyde (GSA). The chain is Glutamyl-tRNA reductase from Fusobacterium nucleatum subsp. nucleatum (strain ATCC 25586 / DSM 15643 / BCRC 10681 / CIP 101130 / JCM 8532 / KCTC 2640 / LMG 13131 / VPI 4355).